The chain runs to 112 residues: Large ribosomal subunit protein P1 (112 aa).

Residues 71-90 (PAQAAAAAPAGGAPAAAAPA) show a composition bias toward low complexity. The tract at residues 71-112 (PAQAAAAAPAGGAPAAAAPAESKEGRRSQGESDDDMGFGLLD) is disordered. Positions 91-100 (ESKEGRRSQG) are enriched in basic and acidic residues.

The protein belongs to the eukaryotic ribosomal protein P1/P2 family. As to quaternary structure, P1 and P2 exist as dimers at the large ribosomal subunit.

Plays an important role in the elongation step of protein synthesis. The sequence is that of Large ribosomal subunit protein P1 (rpl-21) from Oscheius tipulae.